Here is a 495-residue protein sequence, read N- to C-terminus: Carotenoid 3,4-desaturase (495 aa).

It belongs to the carotenoid/retinoid oxidoreductase family.

The enzyme catalyses dihydroisopentenyldehydrorhodopin + A = isopentenyldehydrorhodopin + AH2. It catalyses the reaction dihydrobisanhydrobacterioruberin + A = bisanhydrobacterioruberin + AH2. It participates in carotenoid biosynthesis. In terms of biological role, involved in the biosynthesis of the acyclic C50 carotenoid bacterioruberin (BR). CrtD is involved in the desaturation reactions that form double bonds at C-3,4 of dihydroisopentenyldehydrorhodopin (DH-IDR) and C-3',4' of dihydrobisanhydrobacterioruberin (DH-BABR) to yield isopentenyld ehydrorhodopin (IDR) and bisanhydrobacterioruberin (BABR), respectively. The protein is Carotenoid 3,4-desaturase of Haloarcula japonica (strain ATCC 49778 / DSM 6131 / JCM 7785 / NBRC 101032 / NCIMB 13157 / TR-1).